We begin with the raw amino-acid sequence, 273 residues long: 4-hydroxy-tetrahydrodipicolinate reductase (273 aa).

Residues 12 to 17 (GAGGRM) and Glu-38 each bind NAD(+). Arg-39 lines the NADP(+) pocket. NAD(+) contacts are provided by residues 102-104 (GTT) and 126-129 (AANF). The active-site Proton donor/acceptor is His-159. His-160 serves as a coordination point for (S)-2,3,4,5-tetrahydrodipicolinate. Catalysis depends on Lys-163, which acts as the Proton donor. Residue 169–170 (GT) coordinates (S)-2,3,4,5-tetrahydrodipicolinate.

Belongs to the DapB family. In terms of assembly, homotetramer.

It localises to the cytoplasm. It catalyses the reaction (S)-2,3,4,5-tetrahydrodipicolinate + NAD(+) + H2O = (2S,4S)-4-hydroxy-2,3,4,5-tetrahydrodipicolinate + NADH + H(+). It carries out the reaction (S)-2,3,4,5-tetrahydrodipicolinate + NADP(+) + H2O = (2S,4S)-4-hydroxy-2,3,4,5-tetrahydrodipicolinate + NADPH + H(+). It participates in amino-acid biosynthesis; L-lysine biosynthesis via DAP pathway; (S)-tetrahydrodipicolinate from L-aspartate: step 4/4. Its function is as follows. Catalyzes the conversion of 4-hydroxy-tetrahydrodipicolinate (HTPA) to tetrahydrodipicolinate. This chain is 4-hydroxy-tetrahydrodipicolinate reductase, found in Salmonella paratyphi A (strain ATCC 9150 / SARB42).